The following is a 360-amino-acid chain: UDP-N-acetylglucosamine--N-acetylmuramyl-(pentapeptide) pyrophosphoryl-undecaprenol N-acetylglucosamine transferase (360 aa).

UDP-N-acetyl-alpha-D-glucosamine is bound by residues 13–15 (TGG), asparagine 125, arginine 164, serine 191, and glutamine 290.

It belongs to the glycosyltransferase 28 family. MurG subfamily.

It is found in the cell inner membrane. It catalyses the reaction di-trans,octa-cis-undecaprenyl diphospho-N-acetyl-alpha-D-muramoyl-L-alanyl-D-glutamyl-meso-2,6-diaminopimeloyl-D-alanyl-D-alanine + UDP-N-acetyl-alpha-D-glucosamine = di-trans,octa-cis-undecaprenyl diphospho-[N-acetyl-alpha-D-glucosaminyl-(1-&gt;4)]-N-acetyl-alpha-D-muramoyl-L-alanyl-D-glutamyl-meso-2,6-diaminopimeloyl-D-alanyl-D-alanine + UDP + H(+). Its pathway is cell wall biogenesis; peptidoglycan biosynthesis. Cell wall formation. Catalyzes the transfer of a GlcNAc subunit on undecaprenyl-pyrophosphoryl-MurNAc-pentapeptide (lipid intermediate I) to form undecaprenyl-pyrophosphoryl-MurNAc-(pentapeptide)GlcNAc (lipid intermediate II). The sequence is that of UDP-N-acetylglucosamine--N-acetylmuramyl-(pentapeptide) pyrophosphoryl-undecaprenol N-acetylglucosamine transferase from Hahella chejuensis (strain KCTC 2396).